A 403-amino-acid chain; its full sequence is MALNTSAEAPLPVGEVSRLIGGWIDRLGAIWVEGQITQLSRRPGAGVVFLTLRDPSHDISVSVTCFRQVFDRIADVVTEGARVVVLAKPEWYAPRGQLSLRATDIRPVGIGELLVRLEQLKKSLAAEGLFALDRKKPLPFLPQLVGLVCGRASAAERDVLENARRRWPAVRFEVRNTAVQGVNAVAQVVQAVEELDALQEVDVIVVARGGGSVEDLLPFSDEQLIRTVAACRTPVVSAIGHEPDSPLLDLVADLRASTPTDAAKKVVPDVGEELERVQQLRDRALRTVRGLLDREERGLAHALGRPAMERPHRLVDEREAEVDALLGRARRVLGHLLDRADSELSHTLARVVSLSPAATLERGYAVLQRPDGHVVRSPEEAGAPGEPLRARVSEGEFTVRVDG.

The protein belongs to the XseA family. Heterooligomer composed of large and small subunits.

The protein localises to the cytoplasm. It carries out the reaction Exonucleolytic cleavage in either 5'- to 3'- or 3'- to 5'-direction to yield nucleoside 5'-phosphates.. In terms of biological role, bidirectionally degrades single-stranded DNA into large acid-insoluble oligonucleotides, which are then degraded further into small acid-soluble oligonucleotides. This chain is Exodeoxyribonuclease 7 large subunit, found in Streptomyces griseus subsp. griseus (strain JCM 4626 / CBS 651.72 / NBRC 13350 / KCC S-0626 / ISP 5235).